We begin with the raw amino-acid sequence, 113 residues long: Protein translation factor SUI1 homolog (113 aa).

The tract at residues 1-24 (MSELDSQVPTAFDPFADANAEDSG) is disordered. Residue Ser-2 is modified to N-acetylserine.

The protein belongs to the SUI1 family.

In terms of biological role, probably involved in translation. This chain is Protein translation factor SUI1 homolog, found in Brassica oleracea (Wild cabbage).